Here is a 677-residue protein sequence, read N- to C-terminus: Methionine--tRNA ligase (677 aa).

Residues 15 to 25 (PYANGSIHLGH) carry the 'HIGH' region motif. 4 residues coordinate Zn(2+): Cys-146, Cys-149, Cys-159, and Cys-162. Residues 333–337 (KMSKS) carry the 'KMSKS' region motif. Lys-336 lines the ATP pocket. The tRNA-binding domain occupies 575-677 (DFAKVDLRVA…AGAKPGHQVK (103 aa)).

This sequence belongs to the class-I aminoacyl-tRNA synthetase family. MetG type 1 subfamily. As to quaternary structure, homodimer. Requires Zn(2+) as cofactor.

It is found in the cytoplasm. It catalyses the reaction tRNA(Met) + L-methionine + ATP = L-methionyl-tRNA(Met) + AMP + diphosphate. Functionally, is required not only for elongation of protein synthesis but also for the initiation of all mRNA translation through initiator tRNA(fMet) aminoacylation. The sequence is that of Methionine--tRNA ligase from Escherichia coli O127:H6 (strain E2348/69 / EPEC).